Reading from the N-terminus, the 276-residue chain is Large ribosomal subunit protein uL2 (276 aa).

Residues M226–G276 form a disordered region.

Belongs to the universal ribosomal protein uL2 family. Part of the 50S ribosomal subunit. Forms a bridge to the 30S subunit in the 70S ribosome.

Functionally, one of the primary rRNA binding proteins. Required for association of the 30S and 50S subunits to form the 70S ribosome, for tRNA binding and peptide bond formation. It has been suggested to have peptidyltransferase activity; this is somewhat controversial. Makes several contacts with the 16S rRNA in the 70S ribosome. The protein is Large ribosomal subunit protein uL2 of Vesicomyosocius okutanii subsp. Calyptogena okutanii (strain HA).